A 409-amino-acid chain; its full sequence is O-glucosyltransferase rumi (409 aa).

Residues 1–20 form the signal peptide; the sequence is MLINVVLIILLVGLNGKASG. Disulfide bonds link Cys62/Cys73, Cys71/Cys376, Cys118/Cys124, and Cys280/Cys303. Asp149 (proton donor/acceptor) is an active-site residue. The interaction with the consensus sequence C-X-S-X-[PA]-C in peptide substrates stretch occupies residues 190 to 195; the sequence is ATKLHP. Residues 227–231, Arg235, 274–276, and 292–296 each bind UDP-alpha-D-glucose; these read RGSRT, VSF, and AASFR. A Prevents secretion from ER motif is present at residues 406-409; it reads KDEL.

This sequence belongs to the glycosyltransferase 90 family.

The protein localises to the endoplasmic reticulum lumen. It participates in protein modification; protein glycosylation. Protein O-glucosyltransferase. Catalyzes the reaction that attaches glucose through an O-glycosidic linkage to a conserved serine residue found in the consensus sequence C-X-S-X-[PA]-C in epidermal growth factor-like repeats. Regulates Notch signaling by glucosylating Notch in the ER, glucosylation is required for the correct folding and cleavage of Notch. This is O-glucosyltransferase rumi from Drosophila pseudoobscura pseudoobscura (Fruit fly).